The following is a 347-amino-acid chain: Putative histone PARylation factor 1-like (347 aa).

At methionine 1 the chain carries N-acetylmethionine. Residues lysine 187 and lysine 234 each carry the N6-acetyllysine modification.

The protein belongs to the HPF1 family.

The chain is Putative histone PARylation factor 1-like from Homo sapiens (Human).